The following is a 273-amino-acid chain: DNA repair protein RecO (273 aa).

The tract at residues 250–273 (NVGQNPSGKDDLNERRDVDGTGES) is disordered. Positions 257 to 273 (GKDDLNERRDVDGTGES) are enriched in basic and acidic residues.

This sequence belongs to the RecO family.

In terms of biological role, involved in DNA repair and RecF pathway recombination. The polypeptide is DNA repair protein RecO (Desulfitobacterium hafniense (strain DSM 10664 / DCB-2)).